A 122-amino-acid chain; its full sequence is Ribosome-binding factor A (122 aa).

This sequence belongs to the RbfA family. Monomer. Binds 30S ribosomal subunits, but not 50S ribosomal subunits or 70S ribosomes.

It is found in the cytoplasm. In terms of biological role, one of several proteins that assist in the late maturation steps of the functional core of the 30S ribosomal subunit. Associates with free 30S ribosomal subunits (but not with 30S subunits that are part of 70S ribosomes or polysomes). Required for efficient processing of 16S rRNA. May interact with the 5'-terminal helix region of 16S rRNA. The protein is Ribosome-binding factor A of Pelobacter propionicus (strain DSM 2379 / NBRC 103807 / OttBd1).